The following is a 479-amino-acid chain: Cyclin-dependent kinase F-1 (479 aa).

In terms of domain architecture, Protein kinase spans 24–419 (YEVLGRAGSG…AADLLNDPYF (396 aa)). ATP contacts are provided by residues 30 to 38 (AGSGAYADV) and K53. D146 functions as the Proton acceptor in the catalytic mechanism. T291 is subject to Phosphothreonine. Residues 429–479 (EGLQVPESKDEDDDSTEEWANFRGGDSDSDFDEFGSMDVTKTDKGFSIRFS) form a disordered region. Residues 468–479 (TKTDKGFSIRFS) show a composition bias toward basic and acidic residues.

Belongs to the protein kinase superfamily. CMGC Ser/Thr protein kinase family. CDC2/CDKX subfamily.

The catalysed reaction is L-seryl-[protein] + ATP = O-phospho-L-seryl-[protein] + ADP + H(+). The enzyme catalyses L-threonyl-[protein] + ATP = O-phospho-L-threonyl-[protein] + ADP + H(+). It carries out the reaction [DNA-directed RNA polymerase] + ATP = phospho-[DNA-directed RNA polymerase] + ADP + H(+). The chain is Cyclin-dependent kinase F-1 (CDKF-1) from Oryza sativa subsp. japonica (Rice).